Here is a 186-residue protein sequence, read N- to C-terminus: Ribosome rescue factor SmrB (186 aa).

2 stretches are compositionally biased toward basic and acidic residues: residues 1–16 and 49–60; these read MSKN…SDKD and KQKEIRRTEREA. Disordered stretches follow at residues 1–20 and 41–60; these read MSKN…NLDD and LHAP…EREA. Residues 107–182 form the Smr domain; that stretch reads LDMHGMTQQE…GDGALLVLLS (76 aa).

It belongs to the SmrB family. In terms of assembly, associates with collided ribosomes, but not with correctly translating polysomes.

Acts as a ribosome collision sensor. Detects stalled/collided disomes (pairs of ribosomes where the leading ribosome is stalled and a second ribosome has collided with it) and endonucleolytically cleaves mRNA at the 5' boundary of the stalled ribosome. Stalled/collided disomes form a new interface (primarily via the 30S subunits) that binds SmrB. Cleaved mRNA becomes available for tmRNA ligation, leading to ribosomal subunit dissociation and rescue of stalled ribosomes. This is Ribosome rescue factor SmrB from Vibrio cholerae serotype O1 (strain ATCC 39541 / Classical Ogawa 395 / O395).